The chain runs to 490 residues: Phenylacetaldehyde synthase (490 aa).

Pro-92, His-193, and His-308 together coordinate L-phenylalanine. Lys-309 bears the N6-(pyridoxal phosphate)lysine mark. Phe-338 serves as a coordination point for L-phenylalanine.

It belongs to the group II decarboxylase family. In terms of assembly, homodimer. It depends on pyridoxal 5'-phosphate as a cofactor. As to expression, expressed in roots, rosette leaves, stems, cauline leaves and flowers.

The enzyme catalyses L-phenylalanine + O2 + H2O + H(+) = 2-phenylacetaldehyde + H2O2 + NH4(+) + CO2. It catalyses the reaction L-dopa + O2 + H2O + H(+) = 3,4-dihydroxyphenylacetaldehyde + H2O2 + NH4(+) + CO2. Its function is as follows. Bifunctional enzyme that catalyzes the decarboxylation of L-phenylalanine to 2-phenylethylamine, which is then oxidized to form 2-phenylacetaldehyde, a constituent of floral scent. 2-phenylacetaldehyde is a precursor of 2-phenylethanol, another constituent of floral scent. Catalyzes both the decarboxylation and deamination of L-dopa to 3,4-dihydroxylphenylacetaldehyde (DHPAA). The sequence is that of Phenylacetaldehyde synthase from Arabidopsis thaliana (Mouse-ear cress).